The primary structure comprises 607 residues: MIRTHDAGSLRATDAGSTVTLAGWVARRRDHGGVIFVDLRDGSGVAQVVLREEDAHVLRNEYCVRVTGEVTRRPEGNENPELATGEVEVTAEELEVLSEAAPLPLPVDDQIEAGDDVRLRYRYLDLRRSGPASALRLRSAANQIARTVLHERDFLEIETPTLTRSTPEGARDFLVPVRLQPGTWYALPQSPQLFKQLLMVGGMERYYQIARCYRDEDFRADRQPEFTQLDIEMSFVTEDDVIDLGEAIVSRLWRELAGHQITRPIPRITWHEAMARYGSDKPDLRYGVELTELTDYLRGTRFRVFAGAIEAGGYVGAVVMPGGAAQSRKELDGWQDWAKARGAKGLAYVVLDAETGEARGPVAKNLSTEHLAGLADVVGAKPGDAIFFAAGAESRAAQELLGAARVEIARRANLVDESAWAFCWVVDAPMFERVTDREEAGAGGWTAVHHPFTAPNAEWMDRFEEAPDRALAYAYDIVCNGNEIGGGSIRIHRGDVQQRVFDLLGITPEQARDKFGFLLEAFKYGPPPHGGIAFGWDRVCMLLAGADSIREVIAFPKTRGGFDPLTAAPTPITAAQRLEAGVDARPKPEARAQAGTAGPAAPVADPT.

Position 168 (Glu-168) interacts with L-aspartate. An aspartate region spans residues 192–195 (QLFK). Arg-214 contributes to the L-aspartate binding site. Residues 214–216 (RDE) and Gln-223 each bind ATP. L-aspartate is bound at residue His-449. Glu-483 is an ATP binding site. An L-aspartate-binding site is contributed by Arg-490. ATP is bound at residue 535–538 (GWDR). A disordered region spans residues 578–607 (LEAGVDARPKPEARAQAGTAGPAAPVADPT). Residues 580–590 (AGVDARPKPEA) are compositionally biased toward basic and acidic residues. Positions 591–607 (RAQAGTAGPAAPVADPT) are enriched in low complexity.

The protein belongs to the class-II aminoacyl-tRNA synthetase family. Type 1 subfamily. Homodimer.

It is found in the cytoplasm. It catalyses the reaction tRNA(Asx) + L-aspartate + ATP = L-aspartyl-tRNA(Asx) + AMP + diphosphate. Its function is as follows. Aspartyl-tRNA synthetase with relaxed tRNA specificity since it is able to aspartylate not only its cognate tRNA(Asp) but also tRNA(Asn). Reaction proceeds in two steps: L-aspartate is first activated by ATP to form Asp-AMP and then transferred to the acceptor end of tRNA(Asp/Asn). This Salinispora tropica (strain ATCC BAA-916 / DSM 44818 / JCM 13857 / NBRC 105044 / CNB-440) protein is Aspartate--tRNA(Asp/Asn) ligase.